A 221-amino-acid chain; its full sequence is MADELNKAALEEYKSSSVEDRGEEGEIVGESDDTASSLGKQITMKHPLEHSWTFWFDNPSGKSKQAAWGSSIRPIYTFSTAEDFWSVYNNIHHPSKLAVGADFHCFKNKIEPKWEDPVCANGGKWTMNFSRGKSDTCWLYTLLALIGEQFDYGDEICGAVINVRVRQEKIALWTRNAANETAQVSIGKQWKEFLDYNDTIGFIFHDDAKKLDRAAKNRYSV.

The span at 1–20 (MADELNKAALEEYKSSSVED) shows a compositional bias: basic and acidic residues. The tract at residues 1-36 (MADELNKAALEEYKSSSVEDRGEEGEIVGESDDTAS) is disordered. The segment covering 21-33 (RGEEGEIVGESDD) has biased composition (acidic residues). EIF4G-binding stretches follow at residues 46 to 49 (HPLE) and 56 to 92 (FDNP…NNIH). MRNA-binding positions include 64–69 (KQAAWG), Lys96, and 114–115 (WE). A disulfide bond links Cys119 and Cys157. The segment at 140–149 (YTLLALIGEQ) is EIF4G-binding. Residues 164–169 (RVRQEK) and 209–213 (KKLDR) contribute to the mRNA site.

This sequence belongs to the eukaryotic initiation factor 4E family. In terms of assembly, EIF4F is a multi-subunit complex, the composition of which varies with external and internal environmental conditions. It is composed of at least EIF4A, EIF4E and EIF4G. EIF4E is also known to interact with other partners. In higher plants two isoforms of EIF4F have been identified, named isoform EIF4F and isoform EIF(iso)4F. Isoform EIF4F has subunits p220 and p26, whereas isoform EIF(iso)4F has subunits p82 and p28. As to quaternary structure, (Microbial infection) Interacts with potyvirus viral genome-linked protein (VPg) in the nucleus; mostly potato virus Y (PVY-LYE84) and tobacco etch virus (TEV-HAT) VPg, but not with PVY-LYE90 and pepper mottle virus (PepMoV) VPg; these interactions are possible in susceptible hosts but impaired in resistant plants. According to the redox status, the Cys-119-Cys-157 disulfide bridge may have a role in regulating protein function by affecting its ability to bind capped mRNA.

Its subcellular location is the nucleus. It localises to the cytoplasm. Its function is as follows. Component of the protein complex eIF4F, which is involved in the recognition of the mRNA cap, ATP-dependent unwinding of 5'-terminal secondary structure and recruitment of mRNA to the ribosome. Recognizes and binds the 7-methylguanosine-containing mRNA cap during an early step in the initiation of protein synthesis and facilitates ribosome binding by inducing the unwinding of the mRNAs secondary structures. Key component of recessive resistance to potyviruses. In terms of biological role, (Microbial infection) Susceptibility host factor required for viral infection (e.g. potato virus Y (PVY) and tobacco etch virus (TEV)) by recruiting viral RNAs to the host ribosomal complex via an interaction with viral genome-linked protein (VPg). This is Eukaryotic translation initiation factor 4E-2 from Solanum lycopersicum (Tomato).